The sequence spans 172 residues: Phosphopantetheine adenylyltransferase (172 aa).

T14 provides a ligand contact to substrate. Residues 14-15 (TF) and H22 contribute to the ATP site. 3 residues coordinate substrate: K46, L78, and R92. Residues 93–95 (GMR), E103, and 128–134 (WLYISST) contribute to the ATP site.

Belongs to the bacterial CoaD family. Homohexamer. It depends on Mg(2+) as a cofactor.

It is found in the cytoplasm. The catalysed reaction is (R)-4'-phosphopantetheine + ATP + H(+) = 3'-dephospho-CoA + diphosphate. It functions in the pathway cofactor biosynthesis; coenzyme A biosynthesis; CoA from (R)-pantothenate: step 4/5. Reversibly transfers an adenylyl group from ATP to 4'-phosphopantetheine, yielding dephospho-CoA (dPCoA) and pyrophosphate. This chain is Phosphopantetheine adenylyltransferase, found in Solidesulfovibrio magneticus (strain ATCC 700980 / DSM 13731 / RS-1) (Desulfovibrio magneticus).